The primary structure comprises 587 residues: Capsid vertex component 2 (587 aa).

Residues 1–53 (MAEYVNYVLGSLYVSDTATSTIPTDVRNFIAPPFPLNFWSGPTFTVSSNTRAD) are interaction with major capsid protein/MCP. The segment at 113–132 (SADAATPQVNASEADQRPDN) is disordered.

This sequence belongs to the herpesviridae CVC2 protein family. Heterodimerizes with CVC1. Interacts with major capsid protein/MCP and triplex capsid protein 1/TRX1 at the pentamer vertices. Interacts with the large tegument protein/LTP.

Its subcellular location is the virion. It localises to the host nucleus. Functionally, capsid vertex-specific component that plays a role during viral DNA encapsidation, assuring correct genome cleavage and presumably stabilizing capsids that contain full-length viral genomes. Participates in the interaction between the capsid and the tegument through interaction with the large tegument protein/LTP. This chain is Capsid vertex component 2, found in Equine herpesvirus 1 (strain Ab4p) (EHV-1).